The following is a 363-amino-acid chain: 3-isopropylmalate dehydrogenase (363 aa).

Residue 78–91 (GPKWENLPPESQPE) coordinates NAD(+). The substrate site is built by Arg-99, Arg-109, Arg-138, and Asp-227. Residues Asp-227, Asp-251, and Asp-255 each contribute to the Mg(2+) site. 285–297 (GSAPDIAGKNIAN) contributes to the NAD(+) binding site.

Belongs to the isocitrate and isopropylmalate dehydrogenases family. LeuB type 1 subfamily. Homodimer. It depends on Mg(2+) as a cofactor. Mn(2+) is required as a cofactor.

It localises to the cytoplasm. The enzyme catalyses (2R,3S)-3-isopropylmalate + NAD(+) = 4-methyl-2-oxopentanoate + CO2 + NADH. It functions in the pathway amino-acid biosynthesis; L-leucine biosynthesis; L-leucine from 3-methyl-2-oxobutanoate: step 3/4. Catalyzes the oxidation of 3-carboxy-2-hydroxy-4-methylpentanoate (3-isopropylmalate) to 3-carboxy-4-methyl-2-oxopentanoate. The product decarboxylates to 4-methyl-2 oxopentanoate. This chain is 3-isopropylmalate dehydrogenase, found in Salmonella paratyphi A (strain ATCC 9150 / SARB42).